A 91-amino-acid chain; its full sequence is Bombyxin C-1 (91 aa).

Residues 1–19 form the signal peptide; sequence MKLVMLLVVVSAMLVLGGA. A Pyrrolidone carboxylic acid modification is found at glutamine 20. Cystine bridges form between cysteine 27/cysteine 76, cysteine 39/cysteine 89, and cysteine 75/cysteine 80. Positions 47–67 are cleaved as a propeptide — c peptide like; the sequence is SGSQYAGYGWPWLPPFSSSRG.

It belongs to the insulin family. As to quaternary structure, heterodimer of a B chain and an A chain linked by two disulfide bonds.

It localises to the secreted. Brain peptide responsible for activation of prothoracic glands to produce ecdysone in insects. The protein is Bombyxin C-1 (BBXC1) of Bombyx mori (Silk moth).